A 677-amino-acid chain; its full sequence is Methionine--tRNA ligase (677 aa).

Positions 15-25 (PYANGSIHLGH) match the 'HIGH' region motif. Zn(2+) contacts are provided by C146, C149, C159, and C162. The 'KMSKS' region motif lies at 333 to 337 (KMSKS). K336 provides a ligand contact to ATP. A tRNA-binding domain is found at 575-677 (DFAKVDLRVA…DGAKPGQQVK (103 aa)).

This sequence belongs to the class-I aminoacyl-tRNA synthetase family. MetG type 1 subfamily. Homodimer. Requires Zn(2+) as cofactor.

It localises to the cytoplasm. It catalyses the reaction tRNA(Met) + L-methionine + ATP = L-methionyl-tRNA(Met) + AMP + diphosphate. Is required not only for elongation of protein synthesis but also for the initiation of all mRNA translation through initiator tRNA(fMet) aminoacylation. This is Methionine--tRNA ligase from Klebsiella pneumoniae (strain 342).